Here is a 627-residue protein sequence, read N- to C-terminus: 1-deoxy-D-xylulose-5-phosphate synthase (627 aa).

Residues His75 and 116-118 (AHS) each bind thiamine diphosphate. Asp147 contributes to the Mg(2+) binding site. Thiamine diphosphate contacts are provided by residues 148–149 (GA), Asn177, Tyr284, and Glu366. Residue Asn177 coordinates Mg(2+).

The protein belongs to the transketolase family. DXPS subfamily. In terms of assembly, homodimer. It depends on Mg(2+) as a cofactor. Thiamine diphosphate is required as a cofactor.

It catalyses the reaction D-glyceraldehyde 3-phosphate + pyruvate + H(+) = 1-deoxy-D-xylulose 5-phosphate + CO2. It functions in the pathway metabolic intermediate biosynthesis; 1-deoxy-D-xylulose 5-phosphate biosynthesis; 1-deoxy-D-xylulose 5-phosphate from D-glyceraldehyde 3-phosphate and pyruvate: step 1/1. Catalyzes the acyloin condensation reaction between C atoms 2 and 3 of pyruvate and glyceraldehyde 3-phosphate to yield 1-deoxy-D-xylulose-5-phosphate (DXP). The polypeptide is 1-deoxy-D-xylulose-5-phosphate synthase (Bordetella petrii (strain ATCC BAA-461 / DSM 12804 / CCUG 43448)).